The following is a 794-amino-acid chain: Sucrose synthase (794 aa).

The tract at residues 263–742 (MISRLLILSP…ALDRVASRYT (480 aa)) is GT-B glycosyltransferase.

It belongs to the glycosyltransferase 1 family. As to quaternary structure, homotetramer.

It catalyses the reaction an NDP-alpha-D-glucose + D-fructose = a ribonucleoside 5'-diphosphate + sucrose + H(+). The catalysed reaction is ADP-alpha-D-glucose + D-fructose = sucrose + ADP + H(+). Inhibited by GDP over 10 mM and by over 2 mM MgCl(2). Functionally, catalyzes the reversible conversion of sucrose and a nucleotide disphosphate (NDP) into fructose and NDP-glucose; although the reaction is freely reversible in vitro, the physiological reaction seems to be sucrose cleavage. Unlike characterized plant enzymes prefers ADP as a cosubstrate, whereas plants prefer UDP. The KM for sucrose is 8-fold lower in the presence of ADP than UDP. Its preference for ADP over UDP suggests it may directly link sucrose and glycogen metabolism. The protein is Sucrose synthase (ss2) of Nitrosomonas europaea (strain ATCC 19718 / CIP 103999 / KCTC 2705 / NBRC 14298).